A 188-amino-acid chain; its full sequence is ATP synthase subunit b (188 aa).

A helical transmembrane segment spans residues 5 to 25 (MLLIFMMIVMIASSAMAAEAE).

It belongs to the ATPase B chain family. In terms of assembly, F-type ATPases have 2 components, F(1) - the catalytic core - and F(0) - the membrane proton channel. F(1) has five subunits: alpha(3), beta(3), gamma(1), delta(1), epsilon(1). F(0) has three main subunits: a(1), b(2) and c(10-14). The alpha and beta chains form an alternating ring which encloses part of the gamma chain. F(1) is attached to F(0) by a central stalk formed by the gamma and epsilon chains, while a peripheral stalk is formed by the delta and b chains.

Its subcellular location is the cell inner membrane. In terms of biological role, f(1)F(0) ATP synthase produces ATP from ADP in the presence of a proton or sodium gradient. F-type ATPases consist of two structural domains, F(1) containing the extramembraneous catalytic core and F(0) containing the membrane proton channel, linked together by a central stalk and a peripheral stalk. During catalysis, ATP synthesis in the catalytic domain of F(1) is coupled via a rotary mechanism of the central stalk subunits to proton translocation. Functionally, component of the F(0) channel, it forms part of the peripheral stalk, linking F(1) to F(0). The sequence is that of ATP synthase subunit b from Thermodesulfovibrio yellowstonii (strain ATCC 51303 / DSM 11347 / YP87).